Reading from the N-terminus, the 65-residue chain is MPKIKTLKSAAKRFKITASGKFKRKQANLRHILTKKTTTKKRHLRPKILVSTGDMDRVKSFLPYA.

The protein belongs to the bacterial ribosomal protein bL35 family.

This is Large ribosomal subunit protein bL35 from Buchnera aphidicola subsp. Acyrthosiphon pisum (strain 5A).